We begin with the raw amino-acid sequence, 882 residues long: Alanine--tRNA ligase (882 aa).

4 residues coordinate Zn(2+): histidine 571, histidine 575, cysteine 673, and histidine 677.

It belongs to the class-II aminoacyl-tRNA synthetase family. Zn(2+) serves as cofactor.

Its subcellular location is the cytoplasm. The enzyme catalyses tRNA(Ala) + L-alanine + ATP = L-alanyl-tRNA(Ala) + AMP + diphosphate. Catalyzes the attachment of alanine to tRNA(Ala) in a two-step reaction: alanine is first activated by ATP to form Ala-AMP and then transferred to the acceptor end of tRNA(Ala). Also edits incorrectly charged Ser-tRNA(Ala) and Gly-tRNA(Ala) via its editing domain. The protein is Alanine--tRNA ligase of Desulfotalea psychrophila (strain LSv54 / DSM 12343).